The sequence spans 574 residues: Zinc finger and BTB domain-containing protein 3 (574 aa).

The 69-residue stretch at 74–142 (CDCTVMVGST…MYAGQLTLRG (69 aa)) folds into the BTB domain. 2 disordered regions span residues 175-277 (AEAD…SSTE) and 305-346 (SLRV…APAP). Residues Lys181 and Lys182 each participate in a glycyl lysine isopeptide (Lys-Gly) (interchain with G-Cter in SUMO2) cross-link. A compositionally biased stretch (polar residues) spans 187 to 212 (NSQLPSLEFLSSTSRGTQPSLASAET). The segment covering 323–334 (PPASAPTSAPAP) has biased composition (low complexity). Position 362 is a phosphoserine (Ser362). The tract at residues 364–403 (EETDVSDEQPQGPERAFPSGGAVYGAQPSQPEAFEDPGAA) is disordered. 2 C2H2-type zinc fingers span residues 472–494 (PTCK…ATVH) and 500–523 (YECR…RKAH). Residues 526-535 (DLAKRSKPDP) are compositionally biased toward basic and acidic residues. The segment at 526-574 (DLAKRSKPDPEVGPLLGVQPLPGSPTADRQSSSGGGPPKDFVLAPKTNI) is disordered. A Glycyl lysine isopeptide (Lys-Gly) (interchain with G-Cter in SUMO2) cross-link involves residue Lys532. Ser549 bears the Phosphoserine mark.

It is found in the nucleus. May be involved in transcriptional regulation. The chain is Zinc finger and BTB domain-containing protein 3 (ZBTB3) from Homo sapiens (Human).